We begin with the raw amino-acid sequence, 397 residues long: 8-amino-7-oxononanoate synthase (397 aa).

A substrate-binding site is contributed by Arg24. 110–111 serves as a coordination point for pyridoxal 5'-phosphate; sequence GY. Position 135 (His135) interacts with substrate. Ser183, His211, and Thr240 together coordinate pyridoxal 5'-phosphate. The residue at position 243 (Lys243) is an N6-(pyridoxal phosphate)lysine. A substrate-binding site is contributed by Thr357.

It belongs to the class-II pyridoxal-phosphate-dependent aminotransferase family. BioF subfamily. In terms of assembly, homodimer. Requires pyridoxal 5'-phosphate as cofactor.

It carries out the reaction 6-carboxyhexanoyl-[ACP] + L-alanine + H(+) = (8S)-8-amino-7-oxononanoate + holo-[ACP] + CO2. It functions in the pathway cofactor biosynthesis; biotin biosynthesis. Functionally, catalyzes the decarboxylative condensation of pimeloyl-[acyl-carrier protein] and L-alanine to produce 8-amino-7-oxononanoate (AON), [acyl-carrier protein], and carbon dioxide. This is 8-amino-7-oxononanoate synthase from Hydrogenovibrio crunogenus (strain DSM 25203 / XCL-2) (Thiomicrospira crunogena).